Consider the following 209-residue polypeptide: Uracil phosphoribosyltransferase (209 aa).

Residues Arg79, Arg104, and 131-139 each bind 5-phospho-alpha-D-ribose 1-diphosphate; that span reads DPMLATGGS. Residues Ile194 and 199 to 201 each bind uracil; that span reads GDA. Asp200 serves as a coordination point for 5-phospho-alpha-D-ribose 1-diphosphate.

This sequence belongs to the UPRTase family. Requires Mg(2+) as cofactor.

It catalyses the reaction UMP + diphosphate = 5-phospho-alpha-D-ribose 1-diphosphate + uracil. Its pathway is pyrimidine metabolism; UMP biosynthesis via salvage pathway; UMP from uracil: step 1/1. Allosterically activated by GTP. In terms of biological role, catalyzes the conversion of uracil and 5-phospho-alpha-D-ribose 1-diphosphate (PRPP) to UMP and diphosphate. The polypeptide is Uracil phosphoribosyltransferase (Listeria innocua serovar 6a (strain ATCC BAA-680 / CLIP 11262)).